A 183-amino-acid chain; its full sequence is Regulatory protein RecX (183 aa).

A compositionally biased stretch (polar residues) spans 1–12; sequence MTSFPHPSTSES. The segment at 1-26 is disordered; sequence MTSFPHPSTSESGPDPDSEPNREEQA.

The protein belongs to the RecX family.

It is found in the cytoplasm. In terms of biological role, modulates RecA activity. This Mycobacterium sp. (strain KMS) protein is Regulatory protein RecX.